A 351-amino-acid polypeptide reads, in one-letter code: MASSLLLALLFLTLATVVNLKTDGPCPACWGATFDLESHRELLLDLAKKSILDKLHLSQRPILSRPVSREALKTALRRLRGTRAETLLEHDQRQEYEIISFADTGLSNINQTRLEFHFSDRTTGGVEVLQTRFMFFMQLPPNTTQTMNIRVLVLRPYDTNLTLTSQYMLQVDASGWYQLLLGPEAQAACSQGHLTLELVPESQLAHSSLILDGVSHRPFVAAQVRVEGKHRVRRRGINCQGLSRMCCRQEFFVDFREIGWHDWIIQPEGYAMNFCTGQCPLHVAGMPGISASFHTAVLNLLKANTDAGTARRGSCCVPTSRRPLSLLYYDRDSNIVKTDIPDMVVEACGCS.

The N-terminal stretch at Met1 to Val18 is a signal peptide. The propeptide occupies Asn19 to Gly236. 3 N-linked (GlcNAc...) asparagine glycosylation sites follow: Asn110, Asn142, and Asn160. Intrachain disulfides connect Cys239–Cys247, Cys246–Cys316, Cys275–Cys348, and Cys279–Cys350.

The protein belongs to the TGF-beta family. In terms of assembly, homodimeric or heterodimeric through association with alpha and beta subunits, linked by one or more disulfide bonds. Inhibins are heterodimers of one alpha and one beta subunit. Activins are homo- or heterodimers of beta subunits only.

It localises to the secreted. Functionally, inhibins and activins inhibit and activate, respectively, the secretion of follitropin by the pituitary gland. Inhibins/activins are involved in regulating a number of diverse functions such as hypothalamic and pituitary hormone secretion, gonadal hormone secretion, germ cell development and maturation, erythroid differentiation, insulin secretion, nerve cell survival, embryonic axial development or bone growth, depending on their subunit composition. Inhibins appear to oppose the functions of activins. In Rattus norvegicus (Rat), this protein is Inhibin beta C chain (Inhbc).